A 239-amino-acid chain; its full sequence is Ribosomal RNA small subunit methyltransferase G (239 aa).

Residues Gly-77, Phe-82, 128–129, and Arg-147 each bind S-adenosyl-L-methionine; that span reads AE.

This sequence belongs to the methyltransferase superfamily. RNA methyltransferase RsmG family.

It is found in the cytoplasm. In terms of biological role, specifically methylates the N7 position of guanine in position 535 of 16S rRNA. This chain is Ribosomal RNA small subunit methyltransferase G, found in Bacillus mycoides (strain KBAB4) (Bacillus weihenstephanensis).